A 215-amino-acid chain; its full sequence is RxLR effector protein PITG_00582 (215 aa).

Positions 1–19 (MLPYKTLLLALGFFFTVQC) are cleaved as a signal peptide. The RxLR-dEER signature appears at 39-51 (RLLRSPEKTDEER). Positions 81-149 (VAKQAKEMSN…QNELEKLAKQ (69 aa)) form a coiled coil.

This sequence belongs to the RxLR effector family.

The protein localises to the secreted. It localises to the host cell membrane. Effector that might be involved in host plant infection. The chain is RxLR effector protein PITG_00582 from Phytophthora infestans (strain T30-4) (Potato late blight agent).